Here is a 372-residue protein sequence, read N- to C-terminus: Ligninase A (372 aa).

Residues 1-21 (MAFKQLVAAISLALSLTTANA) form the signal peptide. A propeptide spanning residues 22–28 (AVVKEKR) is cleaved from the precursor. Intrachain disulfides connect C31–C43, C42–C313, C62–C148, and C277–C345. H75 acts as the Proton acceptor in catalysis. Ca(2+) contacts are provided by D76, G94, D96, and S98. H204 serves as a coordination point for heme b. 5 residues coordinate Ca(2+): S205, D222, T224, I227, and D229. The N-linked (GlcNAc...) asparagine glycan is linked to N285.

The protein belongs to the peroxidase family. Ligninase subfamily. Requires heme b as cofactor. Ca(2+) serves as cofactor.

The enzyme catalyses 1-(3,4-dimethoxyphenyl)-2-(2-methoxyphenoxy)propane-1,3-diol + H2O2 = 3,4-dimethoxybenzaldehyde + guaiacol + glycolaldehyde + H2O. The catalysed reaction is 2 (3,4-dimethoxyphenyl)methanol + H2O2 = 2 (3,4-dimethoxyphenyl)methanol radical + 2 H2O. It functions in the pathway secondary metabolite metabolism; lignin degradation. Its function is as follows. Depolymerization of lignin. Catalyzes the C(alpha)-C(beta) cleavage of the propyl side chains of lignin. This chain is Ligninase A (LIPA), found in Phanerodontia chrysosporium (White-rot fungus).